The primary structure comprises 242 residues: Type III pantothenate kinase (242 aa).

7–14 lines the ATP pocket; it reads DLGNSRFK. Substrate is bound by residues Y91 and 98–101; that span reads GVDR. The active-site Proton acceptor is the D100. Residue T121 coordinates ATP. Position 171 (T171) interacts with substrate.

Belongs to the type III pantothenate kinase family. Homodimer. The cofactor is NH4(+). K(+) is required as a cofactor.

It localises to the cytoplasm. It catalyses the reaction (R)-pantothenate + ATP = (R)-4'-phosphopantothenate + ADP + H(+). It functions in the pathway cofactor biosynthesis; coenzyme A biosynthesis; CoA from (R)-pantothenate: step 1/5. Its function is as follows. Catalyzes the phosphorylation of pantothenate (Pan), the first step in CoA biosynthesis. In Xylella fastidiosa (strain M23), this protein is Type III pantothenate kinase.